A 314-amino-acid chain; its full sequence is DNA-directed RNA polymerase subunit alpha (314 aa).

Residues 1–228 are alpha N-terminal domain (alpha-NTD); that stretch reads MIEIEKPKIE…EHLNIFVGLT (228 aa). The alpha C-terminal domain (alpha-CTD) stretch occupies residues 246 to 314; that stretch reads EKVLEMTIEE…ELGLGLRKDD (69 aa).

It belongs to the RNA polymerase alpha chain family. In terms of assembly, homodimer. The RNAP catalytic core consists of 2 alpha, 1 beta, 1 beta' and 1 omega subunit. When a sigma factor is associated with the core the holoenzyme is formed, which can initiate transcription.

The catalysed reaction is RNA(n) + a ribonucleoside 5'-triphosphate = RNA(n+1) + diphosphate. DNA-dependent RNA polymerase catalyzes the transcription of DNA into RNA using the four ribonucleoside triphosphates as substrates. The sequence is that of DNA-directed RNA polymerase subunit alpha from Bacillus pumilus (strain SAFR-032).